Reading from the N-terminus, the 217-residue chain is MENQPKLNSSKEVIAFLAERFPHCFSAEGEARPLKIGIFQDLVDRVAGEMNLSKTQLRSALRLYTSSWRYLYGVKPGATRVDLDGNPCGELDEQHVEHARKQLEEAKARVQAQRAEQQAKKRERKPRPTTPRRKEGAERKPRAQKPVEKAPKTVKAPREEQHTPVSDISALTVGQALKVKAGQNAMDATVLEITKDGVRVQLNSGMSLIVRAEHLVF.

Positions 105 to 166 (EAKARVQAQR…PREEQHTPVS (62 aa)) are disordered. Over residues 121–131 (KRERKPRPTTP) the composition is skewed to basic residues. Residues 132–162 (RRKEGAERKPRAQKPVEKAPKTVKAPREEQH) are compositionally biased toward basic and acidic residues.

Belongs to the ProQ family.

The protein localises to the cytoplasm. In terms of biological role, RNA chaperone with significant RNA binding, RNA strand exchange and RNA duplexing activities. May regulate ProP activity through an RNA-based, post-transcriptional mechanism. The sequence is that of RNA chaperone ProQ from Escherichia coli O8 (strain IAI1).